We begin with the raw amino-acid sequence, 327 residues long: Biotin synthase (327 aa).

One can recognise a Radical SAM core domain in the interval 52–279; sequence TKVQLSTLVS…ASYVRLSAGR (228 aa). Cys67, Cys71, and Cys74 together coordinate [4Fe-4S] cluster. Residues Cys111, Cys142, Cys202, and Arg274 each contribute to the [2Fe-2S] cluster site.

Belongs to the radical SAM superfamily. Biotin synthase family. Homodimer. [4Fe-4S] cluster serves as cofactor. The cofactor is [2Fe-2S] cluster.

The catalysed reaction is (4R,5S)-dethiobiotin + (sulfur carrier)-SH + 2 reduced [2Fe-2S]-[ferredoxin] + 2 S-adenosyl-L-methionine = (sulfur carrier)-H + biotin + 2 5'-deoxyadenosine + 2 L-methionine + 2 oxidized [2Fe-2S]-[ferredoxin]. Its pathway is cofactor biosynthesis; biotin biosynthesis; biotin from 7,8-diaminononanoate: step 2/2. In terms of biological role, catalyzes the conversion of dethiobiotin (DTB) to biotin by the insertion of a sulfur atom into dethiobiotin via a radical-based mechanism. The polypeptide is Biotin synthase (Chromobacterium violaceum (strain ATCC 12472 / DSM 30191 / JCM 1249 / CCUG 213 / NBRC 12614 / NCIMB 9131 / NCTC 9757 / MK)).